Reading from the N-terminus, the 192-residue chain is MKIGILALQGAFAEHARMLEKLGIESVELRNLKNFQQHYSDLSGLILPGGESTAIGKLLRELYMLEPIKQAISSGFPVFGTCAGLILLAKEITSQKESHFGTMDIVVERNAYGRQLGSFYTEADCKGVGKIPMTFIRGPIISSVGKKVNILATVNNKIVAAQEKNMLVTSFHPELTNNLSLHKYFIDICKVA.

Residue 50-52 (GES) participates in L-glutamine binding. C82 functions as the Nucleophile in the catalytic mechanism. Residues R109 and 136–137 (IR) contribute to the L-glutamine site. Residues H172 and E174 each act as charge relay system in the active site.

The protein belongs to the glutaminase PdxT/SNO family. In terms of assembly, in the presence of PdxS, forms a dodecamer of heterodimers. Only shows activity in the heterodimer.

It carries out the reaction aldehydo-D-ribose 5-phosphate + D-glyceraldehyde 3-phosphate + L-glutamine = pyridoxal 5'-phosphate + L-glutamate + phosphate + 3 H2O + H(+). The catalysed reaction is L-glutamine + H2O = L-glutamate + NH4(+). It participates in cofactor biosynthesis; pyridoxal 5'-phosphate biosynthesis. Its function is as follows. Catalyzes the hydrolysis of glutamine to glutamate and ammonia as part of the biosynthesis of pyridoxal 5'-phosphate. The resulting ammonia molecule is channeled to the active site of PdxS. In Haemophilus influenzae (strain PittEE), this protein is Pyridoxal 5'-phosphate synthase subunit PdxT.